The chain runs to 248 residues: Glutamine-binding periplasmic protein (248 aa).

The N-terminal stretch at 1-22 (MKSVLKVSLAALTLAFAVSSHA) is a signal peptide.

The protein belongs to the bacterial solute-binding protein 3 family.

The protein localises to the periplasm. Functionally, involved in a glutamine-transport system GlnHPQ. This Escherichia coli O157:H7 protein is Glutamine-binding periplasmic protein (glnH).